The chain runs to 480 residues: ESX-1 secretion system ATPase EccB1 (480 aa).

Residues 44-64 (IALGIVVAVLILAGAALLAYF) traverse the membrane as a helical segment. Residues 461–480 (DTLPADPSPRKVPAGASGAP) are disordered.

This sequence belongs to the EccB family. Part of the ESX-1 / type VII secretion system (T7SS), which is composed of cytosolic and membrane components. The ESX-1 membrane complex is composed of EccB1, EccCa1, EccCb1, EccD1 and EccE1.

Its subcellular location is the cell inner membrane. In terms of biological role, an ATPase. Part of the ESX-1 specialized secretion system, which delivers several virulence factors to host cells during infection, including the key virulence factors EsxA (ESAT-6) and EsxB (CFP-10). The chain is ESX-1 secretion system ATPase EccB1 from Mycobacterium tuberculosis (strain CDC 1551 / Oshkosh).